We begin with the raw amino-acid sequence, 398 residues long: MKILVLNAGSSSHKCCLYAIEGPLPDHPAPPLWEAQLDWHDPNHASLKVKTKRENLEEDLSDVSRADALSHLLTTLWHGPTQVIQMAQEINVVGHRVVHGGQDYQSSVVVTSEVKTAIADLIPLAPNHNPANLEGIKLIEQLLGNVRQVAVFDTAFHSHLPEVAAIYPGPYDWQQQGIRRYGFHGISHQYCTQRTAEILGRGVDRLIICHLGNGASLTAVKQGQSIDTSMGFTPLEGLMMGTRSGSIDPGILIHLMRQGYDADQLDHMLNKASGLKGISGVSHDLREIEQAIAQDNAQAKLARDLYLHRLKACLGSMLMSLGGVDVLVFTGGIGEHSASVRAETCEALAFLGLKLDPILNRKSPVDQDIAAVDSKVRVLVIKTQEDWAIAQSCYEQCC.

N7 provides a ligand contact to Mg(2+). K14 serves as a coordination point for ATP. Position 96 (R96) interacts with substrate. D153 (proton donor/acceptor) is an active-site residue. ATP contacts are provided by residues 210–214 (HLGNG), 284–286 (DLR), and 332–336 (GIGEH). E385 provides a ligand contact to Mg(2+).

This sequence belongs to the acetokinase family. As to quaternary structure, homodimer. The cofactor is Mg(2+). It depends on Mn(2+) as a cofactor.

It is found in the cytoplasm. It carries out the reaction acetate + ATP = acetyl phosphate + ADP. It functions in the pathway metabolic intermediate biosynthesis; acetyl-CoA biosynthesis; acetyl-CoA from acetate: step 1/2. Catalyzes the formation of acetyl phosphate from acetate and ATP. Can also catalyze the reverse reaction. This chain is Acetate kinase, found in Acaryochloris marina (strain MBIC 11017).